The primary structure comprises 362 residues: S-adenosylmethionine:tRNA ribosyltransferase-isomerase (362 aa).

This sequence belongs to the QueA family. In terms of assembly, monomer.

The protein localises to the cytoplasm. It catalyses the reaction 7-aminomethyl-7-carbaguanosine(34) in tRNA + S-adenosyl-L-methionine = epoxyqueuosine(34) in tRNA + adenine + L-methionine + 2 H(+). It functions in the pathway tRNA modification; tRNA-queuosine biosynthesis. Transfers and isomerizes the ribose moiety from AdoMet to the 7-aminomethyl group of 7-deazaguanine (preQ1-tRNA) to give epoxyqueuosine (oQ-tRNA). The polypeptide is S-adenosylmethionine:tRNA ribosyltransferase-isomerase (Yersinia enterocolitica serotype O:8 / biotype 1B (strain NCTC 13174 / 8081)).